A 33-amino-acid polypeptide reads, in one-letter code: Brevinin-2DYd (33 aa).

Cysteine 27 and cysteine 33 are joined by a disulfide.

As to expression, expressed by the skin glands.

It localises to the secreted. Antimicrobial peptide. A mixture of Brevinin-2DYc/2DYd is active against the Gram-positive bacterium S.aureus (MIC=15 uM) and the Gram-negative bacterium E.coli (MIC=15 uM). The chain is Brevinin-2DYd from Rana dybowskii (Dybovsky's frog).